We begin with the raw amino-acid sequence, 216 residues long: Ribosomal RNA small subunit methyltransferase G (216 aa).

S-adenosyl-L-methionine is bound by residues Gly73, Leu78, 124–125 (AE), and Arg139.

It belongs to the methyltransferase superfamily. RNA methyltransferase RsmG family.

It localises to the cytoplasm. Specifically methylates the N7 position of guanine in position 518 of 16S rRNA. The protein is Ribosomal RNA small subunit methyltransferase G of Arthrobacter sp. (strain FB24).